We begin with the raw amino-acid sequence, 481 residues long: Aspartyl/glutamyl-tRNA(Asn/Gln) amidotransferase subunit B (481 aa).

The protein belongs to the GatB/GatE family. GatB subfamily. In terms of assembly, heterotrimer of A, B and C subunits.

The enzyme catalyses L-glutamyl-tRNA(Gln) + L-glutamine + ATP + H2O = L-glutaminyl-tRNA(Gln) + L-glutamate + ADP + phosphate + H(+). It catalyses the reaction L-aspartyl-tRNA(Asn) + L-glutamine + ATP + H2O = L-asparaginyl-tRNA(Asn) + L-glutamate + ADP + phosphate + 2 H(+). Functionally, allows the formation of correctly charged Asn-tRNA(Asn) or Gln-tRNA(Gln) through the transamidation of misacylated Asp-tRNA(Asn) or Glu-tRNA(Gln) in organisms which lack either or both of asparaginyl-tRNA or glutaminyl-tRNA synthetases. The reaction takes place in the presence of glutamine and ATP through an activated phospho-Asp-tRNA(Asn) or phospho-Glu-tRNA(Gln). This chain is Aspartyl/glutamyl-tRNA(Asn/Gln) amidotransferase subunit B, found in Carboxydothermus hydrogenoformans (strain ATCC BAA-161 / DSM 6008 / Z-2901).